Consider the following 310-residue polypeptide: Tagatose-6-phosphate kinase (310 aa).

The protein belongs to the carbohydrate kinase PfkB family. LacC subfamily.

The enzyme catalyses D-tagatofuranose 6-phosphate + ATP = D-tagatofuranose 1,6-bisphosphate + ADP + H(+). It participates in carbohydrate metabolism; D-tagatose 6-phosphate degradation; D-glyceraldehyde 3-phosphate and glycerone phosphate from D-tagatose 6-phosphate: step 1/2. This Staphylococcus aureus (strain MRSA252) protein is Tagatose-6-phosphate kinase.